The sequence spans 204 residues: tRNA (pseudouridine(54)-N(1))-methyltransferase (204 aa).

Residues Leu-130, Gly-157, 180-185 (LSPLEL), and Cys-190 contribute to the S-adenosyl-L-methionine site.

The protein belongs to the methyltransferase superfamily. TrmY family. In terms of assembly, homodimer.

The protein localises to the cytoplasm. It carries out the reaction pseudouridine(54) in tRNA + S-adenosyl-L-methionine = N(1)-methylpseudouridine(54) in tRNA + S-adenosyl-L-homocysteine + H(+). Functionally, specifically catalyzes the N1-methylation of pseudouridine at position 54 (Psi54) in tRNAs. This chain is tRNA (pseudouridine(54)-N(1))-methyltransferase, found in Methanococcus aeolicus (strain ATCC BAA-1280 / DSM 17508 / OCM 812 / Nankai-3).